The primary structure comprises 178 residues: ATP synthase subunit delta (178 aa).

This sequence belongs to the ATPase delta chain family. As to quaternary structure, F-type ATPases have 2 components, F(1) - the catalytic core - and F(0) - the membrane proton channel. F(1) has five subunits: alpha(3), beta(3), gamma(1), delta(1), epsilon(1). F(0) has three main subunits: a(1), b(2) and c(10-14). The alpha and beta chains form an alternating ring which encloses part of the gamma chain. F(1) is attached to F(0) by a central stalk formed by the gamma and epsilon chains, while a peripheral stalk is formed by the delta and b chains.

The protein resides in the cell membrane. In terms of biological role, f(1)F(0) ATP synthase produces ATP from ADP in the presence of a proton or sodium gradient. F-type ATPases consist of two structural domains, F(1) containing the extramembraneous catalytic core and F(0) containing the membrane proton channel, linked together by a central stalk and a peripheral stalk. During catalysis, ATP synthesis in the catalytic domain of F(1) is coupled via a rotary mechanism of the central stalk subunits to proton translocation. This protein is part of the stalk that links CF(0) to CF(1). It either transmits conformational changes from CF(0) to CF(1) or is implicated in proton conduction. This is ATP synthase subunit delta from Streptococcus pyogenes serotype M49 (strain NZ131).